The primary structure comprises 473 residues: Cardiolipin synthase C (473 aa).

2 PLD phosphodiesterase domains span residues 125–152 (LNRRMHNKSFTVDGVVTLVGGRNIGDAY) and 364–391 (SGASLHAKTFSIDGKTVFIGSFNFDPRS). Active-site residues include His130, Lys132, Asp137, His369, Lys371, and Asp376.

The protein belongs to the phospholipase D family. Cardiolipin synthase subfamily. ClsC sub-subfamily.

It catalyses the reaction a 1,2-diacyl-sn-glycero-3-phospho-(1'-sn-glycerol) + a 1,2-diacyl-sn-glycero-3-phosphoethanolamine = a cardiolipin + ethanolamine. Its activity is regulated as follows. Full activity requires coexpression with the neighboring gene ymdB. In terms of biological role, catalyzes the synthesis of cardiolipin (CL) (diphosphatidylglycerol) from phosphatidylglycerol (PG) and phosphatidylethanolamine (PE). This chain is Cardiolipin synthase C, found in Escherichia coli (strain K12).